The following is a 469-amino-acid chain: Adenosylhomocysteinase (469 aa).

Positions 63, 139, and 164 each coordinate substrate. 165 to 167 is a binding site for NAD(+); that stretch reads TTT. Substrate-binding residues include Lys194 and Asp198. NAD(+) is bound by residues Asn199, 228-233, Glu251, Asn300, 321-323, and Asn375; these read GYGDVG and IGH.

It belongs to the adenosylhomocysteinase family. NAD(+) serves as cofactor.

Its subcellular location is the cytoplasm. It carries out the reaction S-adenosyl-L-homocysteine + H2O = L-homocysteine + adenosine. It participates in amino-acid biosynthesis; L-homocysteine biosynthesis; L-homocysteine from S-adenosyl-L-homocysteine: step 1/1. May play a key role in the regulation of the intracellular concentration of adenosylhomocysteine. The sequence is that of Adenosylhomocysteinase from Pseudomonas aeruginosa (strain UCBPP-PA14).